The following is a 498-amino-acid chain: Envelope glycoprotein G (498 aa).

Residues 1–20 (MKWATWILALGLLVVRTVVA) form the signal peptide. N56, N86, N142, and N226 each carry an N-linked (GlcNAc...) asparagine; by host glycan. 2 consecutive repeat copies span residues 271–292 (EEEA…VGSP) and 308–329 (EEDE…VGSP). Residues 271 to 329 (EEEAELTSSDLDNIEIEVVGSPAAPAEGPATEEGRGAEEDEELTSSDLDNIEIEVVGSP) are 2 X 22 AA repeats of E-E-[DE]-[AE]-E-L-T-S-S-D-L-D-N-I-E-I-E-V-V-G-S-P. The tract at residues 290–377 (GSPAAPAEGP…HRLPPEPTFV (88 aa)) is disordered. Residues 292 to 301 (PAAPAEGPAT) are compositionally biased toward low complexity. Acidic residues predominate over residues 308 to 322 (EEDEELTSSDLDNIE). Positions 329–342 (PRPPASSPPPPPPR) are enriched in pro residues. Residues 346 to 364 (RGRDHDHDHGHHRADDRGP) show a composition bias toward basic and acidic residues. N443 carries N-linked (GlcNAc...) asparagine; by host glycosylation. The helical transmembrane segment at 463–483 (VALAGLVVVGIVIMCLHMAII) threads the bilayer.

Belongs to the alphaherpesvirinae glycoprotein G family.

The protein localises to the virion membrane. Chemokine-binding protein that inhibits neutrophils' chemotaxis. The polypeptide is Envelope glycoprotein G (gG) (Sus scrofa (Pig)).